Consider the following 39-residue polypeptide: Natriuretic peptide NsNP-b (39 aa).

Positions 1-8 (SGSKTAKI) are excised as a propeptide. Cys-12 and Cys-28 are joined by a disulfide. The segment at 19–39 (RIGSTSGMGCGSVPKPTPGGS) is disordered.

Belongs to the natriuretic peptide family. In terms of tissue distribution, expressed by the venom gland.

The protein localises to the secreted. Functionally, snake venom natriuretic peptide that targets both NPR1 and NPR2. Exhibits hypotensive and vasodepressor activities. In Notechis scutatus scutatus (Mainland tiger snake), this protein is Natriuretic peptide NsNP-b.